A 298-amino-acid chain; its full sequence is 4-diphosphocytidyl-2-C-methyl-D-erythritol kinase (298 aa).

Lys-15 is an active-site residue. An ATP-binding site is contributed by 100-110 (PIAAGIGGGSA). Residue Asp-142 is part of the active site.

The protein belongs to the GHMP kinase family. IspE subfamily.

The enzyme catalyses 4-CDP-2-C-methyl-D-erythritol + ATP = 4-CDP-2-C-methyl-D-erythritol 2-phosphate + ADP + H(+). Its pathway is isoprenoid biosynthesis; isopentenyl diphosphate biosynthesis via DXP pathway; isopentenyl diphosphate from 1-deoxy-D-xylulose 5-phosphate: step 3/6. Functionally, catalyzes the phosphorylation of the position 2 hydroxy group of 4-diphosphocytidyl-2C-methyl-D-erythritol. The chain is 4-diphosphocytidyl-2-C-methyl-D-erythritol kinase from Rhodopseudomonas palustris (strain BisA53).